The primary structure comprises 79 residues: Small ribosomal subunit protein bS18 (79 aa).

This sequence belongs to the bacterial ribosomal protein bS18 family. As to quaternary structure, part of the 30S ribosomal subunit. Forms a tight heterodimer with protein bS6.

Binds as a heterodimer with protein bS6 to the central domain of the 16S rRNA, where it helps stabilize the platform of the 30S subunit. The polypeptide is Small ribosomal subunit protein bS18 (Streptococcus pneumoniae (strain Hungary19A-6)).